The sequence spans 511 residues: GMP synthase [glutamine-hydrolyzing] (511 aa).

The 191-residue stretch at 5–195 (IVIVLDFGGQ…LFNICGCKGD (191 aa)) folds into the Glutamine amidotransferase type-1 domain. The active-site Nucleophile is the cysteine 82. Active-site residues include histidine 169 and glutamate 171. A GMPS ATP-PPase domain is found at 196-386 (WKTSSFIEER…LGIPEKIVKR (191 aa)). Position 223 to 229 (223 to 229 (SGGVDSS)) interacts with ATP.

Homodimer.

It carries out the reaction XMP + L-glutamine + ATP + H2O = GMP + L-glutamate + AMP + diphosphate + 2 H(+). The protein operates within purine metabolism; GMP biosynthesis; GMP from XMP (L-Gln route): step 1/1. Catalyzes the synthesis of GMP from XMP. The chain is GMP synthase [glutamine-hydrolyzing] from Caldicellulosiruptor saccharolyticus (strain ATCC 43494 / DSM 8903 / Tp8T 6331).